The following is a 319-amino-acid chain: 3'-5' exoribonuclease YhaM (319 aa).

Residues 12–90 constitute a DNA-binding region (OB); sequence EAVDGYLLIK…QLKIASIRPT (79 aa). The HD domain maps to 163–279; it reads HVVSMLRIGK…LHLIDNIDAK (117 aa).

The protein belongs to the YhaM family.

In terms of biological role, shows a 3'-5' exoribonuclease activity. This Shouchella clausii (strain KSM-K16) (Alkalihalobacillus clausii) protein is 3'-5' exoribonuclease YhaM.